Here is a 323-residue protein sequence, read N- to C-terminus: Acetyl-coenzyme A carboxylase carboxyl transferase subunit alpha (323 aa).

One can recognise a CoA carboxyltransferase C-terminal domain in the interval 36 to 293 (ELELLSAKAQ…KEEVVKNLQI (258 aa)).

It belongs to the AccA family. Acetyl-CoA carboxylase is a heterohexamer composed of biotin carboxyl carrier protein (AccB), biotin carboxylase (AccC) and two subunits each of ACCase subunit alpha (AccA) and ACCase subunit beta (AccD).

Its subcellular location is the cytoplasm. The enzyme catalyses N(6)-carboxybiotinyl-L-lysyl-[protein] + acetyl-CoA = N(6)-biotinyl-L-lysyl-[protein] + malonyl-CoA. It functions in the pathway lipid metabolism; malonyl-CoA biosynthesis; malonyl-CoA from acetyl-CoA: step 1/1. Component of the acetyl coenzyme A carboxylase (ACC) complex. First, biotin carboxylase catalyzes the carboxylation of biotin on its carrier protein (BCCP) and then the CO(2) group is transferred by the carboxyltransferase to acetyl-CoA to form malonyl-CoA. In Carboxydothermus hydrogenoformans (strain ATCC BAA-161 / DSM 6008 / Z-2901), this protein is Acetyl-coenzyme A carboxylase carboxyl transferase subunit alpha.